The chain runs to 419 residues: Peptide chain release factor subunit 1 (419 aa).

It belongs to the eukaryotic release factor 1 family. Heterodimer of two subunits, one of which binds GTP.

The protein resides in the cytoplasm. In terms of biological role, directs the termination of nascent peptide synthesis (translation) in response to the termination codons UAA, UAG and UGA. The sequence is that of Peptide chain release factor subunit 1 from Methanococcus maripaludis (strain C5 / ATCC BAA-1333).